The primary structure comprises 623 residues: NAD-dependent malic enzyme 1, mitochondrial (623 aa).

A mitochondrion-targeting transit peptide spans 1-38; sequence MGIANKLRLSSSSLSRILHRRILYSSAVRSFTTSEGHR. Y143 (proton donor) is an active-site residue. R196 provides a ligand contact to NAD(+). K214 functions as the Proton acceptor in the catalytic mechanism. E285, D286, and D309 together coordinate a divalent metal cation. Residues D309 and N464 each contribute to the NAD(+) site.

The protein belongs to the malic enzymes family. Homodimer. Heterodimer of two related subunits in NAD-MEH complex. Interacts with NAD-ME2. The cofactor is Mg(2+). Requires Mn(2+) as cofactor. As to expression, expressed in leaves, stems, flowers, and roots (at protein level).

The protein resides in the mitochondrion. It carries out the reaction (S)-malate + NAD(+) = pyruvate + CO2 + NADH. Activated by oxaloacetate (OAA), 2-ketoglutarate, succinate and fumarate as homodimer and by OAA, 2-ketoglutarate, succinate, fumarate and coenzyme A (acetyl-CoA and CoA) as heterodimer NAD-MEH. Involved in the regulation of sugars and amino acids metabolisms during the night period. This chain is NAD-dependent malic enzyme 1, mitochondrial (NAD-ME1), found in Arabidopsis thaliana (Mouse-ear cress).